A 434-amino-acid chain; its full sequence is Neuropeptide receptor 22 (434 aa).

Residues 1 to 55 lie on the Extracellular side of the membrane; it reads MDEGGGIGSSLLSRITTTASEIMMRNEPTTTENPAVQEMNHIYHLTPSMKMLCIL. The helical transmembrane segment at 56–76 threads the bilayer; the sequence is FYSILCVCCVYGNVLVILVIV. The Cytoplasmic segment spans residues 77–86; it reads YFKRLRTATN. The helical transmembrane segment at 87–107 threads the bilayer; sequence ILILNLAVADLLISVFCIPFS. The Extracellular segment spans residues 108–128; that stretch reads YWQVLIYDDQRWLFGSMMCSL. Residues Cys-126 and Cys-204 are joined by a disulfide bond. A helical transmembrane segment spans residues 129 to 149; sequence LAFLQAMAVFLSAWTLVVISF. Residues 150-169 lie on the Cytoplasmic side of the membrane; that stretch reads DRWMAIMFLLTPNIRITRRR. A helical transmembrane segment spans residues 170–190; that stretch reads ALYLVAATWIFSILMALPLLF. The Extracellular segment spans residues 191–226; that stretch reads TTRFFEDQDGLPNCGENWTYFGDSGEQVRKVYSSMV. Asn-207 carries N-linked (GlcNAc...) asparagine glycosylation. Residues 227–247 form a helical membrane-spanning segment; the sequence is LILQYVVPQAVLIITYTHIGI. Residues 248–277 are Cytoplasmic-facing; that stretch reads KMWNSRVPGMQNGATKKMIVDRHESVKKLV. The chain crosses the membrane as a helical span at residues 278–298; it reads PMVILISALFALCWLPLLILI. At 299-310 the chain is on the extracellular side; that stretch reads NVIPEFYPDINS. Residues 311–331 form a helical membrane-spanning segment; sequence WGYILYLWWFAHGLAMSHSMV. Residues 332 to 434 lie on the Cytoplasmic side of the membrane; the sequence is NPIIYFIRNA…VRNNSANSLA (103 aa).

This sequence belongs to the G-protein coupled receptor 1 family. As to expression, expressed in many cells, mainly in the head region, with expression detected in the head muscles, I2 neurons, MC neurons, RIH neuron, AIA neurons, AUA neurons, ASK neurons, ASI neurons, a few B-type motorneurons in the posterior ventral nerve cord, pharyngeal muscles, body wall muscles, the intestine and a few classes of unidentified cells anterior to the nerve ring. Expression in the MC neurons is important to mediate suppression of feeding while expression in the RIH neuron is important for the facilitation of egg-laying. No expression detected in other tissues including hypodermis.

The protein localises to the cell membrane. In terms of biological role, receptor for the LURY-1-1 and LURY-1-2 peptides which control food-related processes including feeding, lifespan, egg-laying and roaming behavior. Receptor for flp-7 which stimulates serotonin-induced fat loss. Serotonin induces secretion of flp-7 from neurons and binding to npr-22 which leads to induction of the atgp-1 lipase and subsequent fat loss. Acts in vitro as a receptor for the flp-7 FMRFamide-like neuropeptides TPMQRSSMVRF-amide, SPMQRSSMVRF-amide, SPMERSAMVRF-amide and SPMDRSKMVRF-amide. Also acts in vitro as a receptor for a number of other FMRFamide-like neuropeptides including the flp-1 neuropeptide PNFMRY-amide, the flp-9 neuropeptide KPSFVRF-amide, the flp-11 neuropeptides AMRNALVRF-amide, ASGGMRNALVRF-amide and NGAPQPFVRF-amide, the flp-13 neuropeptides AADGAPLIRF-amide, ASPSAPLIRF-amide, SPSAVPLIRF-amide, SAAAPLIRF-amide and ASSAPLIRF-amide, and the flp-22 neuropeptide SPSAKWMRF-amide. The SPMERSAMVRF-amide neuropeptide from flp-7 acts as the strongest in vitro activator of npr-22. The polypeptide is Neuropeptide receptor 22 (Caenorhabditis elegans).